The chain runs to 171 residues: CS1 fimbrial subunit A (171 aa).

The N-terminal stretch at 1-23 is a signal peptide; that stretch reads MKLKKTIGAMALATLFATMGASA.

It belongs to the fimbrial CS1 protein family.

The protein resides in the fimbrium. Fimbriae (also called pili), polar filaments radiating from the surface of the bacterium to a length of 0.5-1.5 micrometers and numbering 100-300 per cell, enable bacteria to colonize the epithelium of specific host organs. The chain is CS1 fimbrial subunit A (csoA) from Escherichia coli.